We begin with the raw amino-acid sequence, 146 residues long: Dual specificity phosphatase Cdc25 (146 aa).

The region spanning 34 to 135 (RRPNIAIIDV…WEASGKPVCR (102 aa)) is the Rhodanese domain. 45–48 (DEER) is a binding site for substrate. A Zn(2+)-binding site is contributed by His53. 68-71 (KISH) contributes to the substrate binding site. Cys86 serves as the catalytic Cysteine persulfide intermediate. Residue 90-92 (QVR) participates in substrate binding. Zn(2+) contacts are provided by Cys134, Cys136, and Cys141.

The protein belongs to the MPI phosphatase family. In terms of tissue distribution, expressed in roots and at lower levels in shoots (at protein level). Expressed in leaves, stems and flowers.

The protein localises to the nucleus. The catalysed reaction is O-phospho-L-tyrosyl-[protein] + H2O = L-tyrosyl-[protein] + phosphate. It carries out the reaction [glutaredoxin]-dithiol + arsenate + glutathione + H(+) = glutathionyl-S-S-[glutaredoxin] + arsenite + H2O. Inhibited by NSC95397. In terms of biological role, tyrosine protein phosphatase that dephosphorylates CDK complex and activate its kinase activity in vitro. Its function is as follows. Arsenate reductase that plays a major role in the reduction of arsenate to arsenite and arsenic retention in roots. Has an in vitro and in vivo arsenate reductase activity. Plays no role in arsenic metabolism. This is Dual specificity phosphatase Cdc25 from Arabidopsis thaliana (Mouse-ear cress).